Here is a 1478-residue protein sequence, read N- to C-terminus: DNA-directed RNA polymerase subunit beta' (1478 aa).

Mg(2+) is bound by residues Asp535, Asp537, and Asp539. Zn(2+) is bound by residues Cys1034, Cys1109, Cys1116, and Cys1119.

It belongs to the RNA polymerase beta' chain family. In terms of assembly, the RNAP catalytic core consists of 2 alpha, 1 beta, 1 beta' and 1 omega subunit. When a sigma factor is associated with the core the holoenzyme is formed, which can initiate transcription. It depends on Mg(2+) as a cofactor. Zn(2+) is required as a cofactor.

It carries out the reaction RNA(n) + a ribonucleoside 5'-triphosphate = RNA(n+1) + diphosphate. Functionally, DNA-dependent RNA polymerase catalyzes the transcription of DNA into RNA using the four ribonucleoside triphosphates as substrates. The polypeptide is DNA-directed RNA polymerase subunit beta' (Mycoplasmopsis agalactiae (strain NCTC 10123 / CIP 59.7 / PG2) (Mycoplasma agalactiae)).